The sequence spans 310 residues: Small ribosomal subunit biogenesis GTPase RsgA (310 aa).

The region spanning 77–238 (LSKQSHILAA…IIDTPGIKGF (162 aa)) is the CP-type G domain. Residues 126–129 (NKVD) and 180–188 (GHSGVGKST) contribute to the GTP site. Cys262, Cys267, His269, and Cys275 together coordinate Zn(2+).

It belongs to the TRAFAC class YlqF/YawG GTPase family. RsgA subfamily. In terms of assembly, monomer. Associates with 30S ribosomal subunit, binds 16S rRNA. Requires Zn(2+) as cofactor.

It is found in the cytoplasm. In terms of biological role, one of several proteins that assist in the late maturation steps of the functional core of the 30S ribosomal subunit. Helps release RbfA from mature subunits. May play a role in the assembly of ribosomal proteins into the subunit. Circularly permuted GTPase that catalyzes slow GTP hydrolysis, GTPase activity is stimulated by the 30S ribosomal subunit. The chain is Small ribosomal subunit biogenesis GTPase RsgA from Bacteroides fragilis (strain ATCC 25285 / DSM 2151 / CCUG 4856 / JCM 11019 / LMG 10263 / NCTC 9343 / Onslow / VPI 2553 / EN-2).